Consider the following 431-residue polypeptide: Serine/threonine-protein kinase Sgk1 (431 aa).

Residues 1–60 (MTVKTEAAKGTLTYSRMRGMVAILIAFMKQRRMGLNDFIQKIANNSYACKHPEVQSILKI) form a necessary for localization to the mitochondria region. Positions 66–92 (PELMNANPSPPPSPSQQINLGPSSNPH) are disordered. At Ser74 the chain carries Phosphoserine. The residue at position 78 (Ser78) is a Phosphoserine; by MAPK7. The span at 81-91 (QQINLGPSSNP) shows a compositional bias: polar residues. Residues 98 to 355 (FHFLKVIGKG…FMEIKSHVFF (258 aa)) form the Protein kinase domain. ATP contacts are provided by residues 104–112 (IGKGSFGKV) and Lys127. The short motif at 131-141 (KKAILKKKEEK) is the Nuclear localization signal element. Residue Asp222 is the Proton acceptor of the active site. At Thr256 the chain carries Phosphothreonine; by PDPK1. Positions 356–431 (SLINWDDLIN…SYAPPTDSFL (76 aa)) constitute an AGC-kinase C-terminal domain. Thr369 is modified (phosphothreonine; by PKA). Phosphoserine occurs at positions 397, 401, and 422.

It belongs to the protein kinase superfamily. AGC Ser/Thr protein kinase family. In terms of assembly, homodimer; disulfide-linked. Forms a trimeric complex with FBXW7 and NOTCH1. Interacts with MAPK3/ERK1, MAPK1/ERK2, MAP2K1/MEK1, MAP2K2/MEK2, NEDD4, NEDD4L, MAPT/TAU, MAPK7, CREB1, SLC9A3R2/NHERF2 and KCNJ1/ROMK1. Associates with the mammalian target of rapamycin complex 2 (mTORC2) via an interaction with MAPKAP1/SIN1. Post-translationally, regulated by phosphorylation. Activated by phosphorylation on Ser-422 by mTORC2, transforming it into a substrate for PDPK1 which phosphorylates it on Thr-256. Phosphorylation on Ser-397 and Ser-401 are also essential for its activity. Phosphorylation on Ser-78 by MAPK7 is required for growth factor-induced cell cycle progression. Ubiquitinated by NEDD4L; which promotes proteasomal degradation. Ubiquitinated by SYVN1 at the endoplasmic reticulum; which promotes rapid proteasomal degradation and maintains a high turnover rate in resting cells.

It localises to the cytoplasm. It is found in the nucleus. The protein resides in the endoplasmic reticulum membrane. The protein localises to the cell membrane. Its subcellular location is the mitochondrion. It catalyses the reaction L-seryl-[protein] + ATP = O-phospho-L-seryl-[protein] + ADP + H(+). The enzyme catalyses L-threonyl-[protein] + ATP = O-phospho-L-threonyl-[protein] + ADP + H(+). Its activity is regulated as follows. Two specific sites, one in the kinase domain (Thr-256) and the other in the C-terminal regulatory region (Ser-422), need to be phosphorylated for its full activation. Phosphorylation at Ser-397 and Ser-401 are also essential for its activity. Activated by WNK1, WNK2, WNK3 and WNK4; which promote phosphorylation by mTORC2. Its function is as follows. Serine/threonine-protein kinase which is involved in the regulation of a wide variety of ion channels, membrane transporters, cellular enzymes, transcription factors, neuronal excitability, cell growth, proliferation, survival, migration and apoptosis. Plays an important role in cellular stress response. Contributes to regulation of renal Na(+) retention, renal K(+) elimination, salt appetite, gastric acid secretion, intestinal Na(+)/H(+) exchange and nutrient transport, insulin-dependent salt sensitivity of blood pressure, salt sensitivity of peripheral glucose uptake, cardiac repolarization and memory consolidation. Up-regulates Na(+) channels: SCNN1A/ENAC, SCN5A and ASIC1/ACCN2, K(+) channels: KCNJ1/ROMK1, KCNA1-5, KCNQ1-5 and KCNE1, epithelial Ca(2+) channels: TRPV5 and TRPV6, chloride channels: BSND, CLCN2 and CFTR, glutamate transporters: SLC1A3/EAAT1, SLC1A2 /EAAT2, SLC1A1/EAAT3, SLC1A6/EAAT4 and SLC1A7/EAAT5, amino acid transporters: SLC1A5/ASCT2, SLC38A1/SN1 and SLC6A19, creatine transporter: SLC6A8, Na(+)/dicarboxylate cotransporter: SLC13A2/NADC1, Na(+)-dependent phosphate cotransporter: SLC34A2/NAPI-2B, glutamate receptor: GRIK2/GLUR6. Up-regulates carriers: SLC9A3/NHE3, SLC12A1/NKCC2, SLC12A3/NCC, SLC5A3/SMIT, SLC2A1/GLUT1, SLC5A1/SGLT1 and SLC15A2/PEPT2. Regulates enzymes: GSK3A/B, PMM2 and Na(+)/K(+) ATPase, and transcription factors: CTNNB1 and nuclear factor NF-kappa-B. Stimulates sodium transport into epithelial cells by enhancing the stability and expression of SCNN1A/ENAC. This is achieved by phosphorylating the NEDD4L ubiquitin E3 ligase, promoting its interaction with 14-3-3 proteins, thereby preventing it from binding to SCNN1A/ENAC and targeting it for degradation. Regulates store-operated Ca(+2) entry (SOCE) by stimulating ORAI1 and STIM1. Regulates KCNJ1/ROMK1 directly via its phosphorylation or indirectly via increased interaction with SLC9A3R2/NHERF2. Phosphorylates MDM2 and activates MDM2-dependent ubiquitination of p53/TP53. Phosphorylates MAPT/TAU and mediates microtubule depolymerization and neurite formation in hippocampal neurons. Phosphorylates SLC2A4/GLUT4 and up-regulates its activity. Phosphorylates APBB1/FE65 and promotes its localization to the nucleus. Phosphorylates MAPK1/ERK2 and activates it by enhancing its interaction with MAP2K1/MEK1 and MAP2K2/MEK2. Phosphorylates FBXW7 and plays an inhibitory role in the NOTCH1 signaling. Phosphorylates FOXO1 resulting in its relocalization from the nucleus to the cytoplasm. Phosphorylates FOXO3, promoting its exit from the nucleus and interference with FOXO3-dependent transcription. Phosphorylates BRAF and MAP3K3/MEKK3 and inhibits their activity. Phosphorylates SLC9A3/NHE3 in response to dexamethasone, resulting in its activation and increased localization at the cell membrane. Phosphorylates CREB1. Necessary for vascular remodeling during angiogenesis. This is Serine/threonine-protein kinase Sgk1 (SGK1) from Macaca fascicularis (Crab-eating macaque).